The primary structure comprises 426 residues: MWPLTALLLLVPSSGQAATLEKPILSLHPPWTTIFKGERVTLKCDGYHPLLLELQPISTLWYLGHLLLPSHKKSIEVQTPGVYRCQTRGAPVSDPIHLSVSNDWLILQVPYAPVFEGEPLVLRCRGWYDKVVYKLHYYHDGQAVRYFHSSANYTVLQARASDSGRYQCSGTMRIPVESAPMFSAKVAVTVQELFRAPVLRVMGPREARGAALGGVVLRCDTRLHPQKRDTPLQFAFYKYSRAVRRFDWGAEYTVPEPEVEELESYWCEAATATRSVRKRSPWLQLPGPGSPLDPASTTAPAPWAAALAPGNRPLSFRKPPVSRSVPLVTSVRNTTSTGLQFPASGAPTAGPPACAPPTPLEQSAGALKPDVDLLLREMQLLKGLLSRVVLELKEPQALRELRGTPETPTSHFAVSPGTPETTPVES.

A signal peptide spans 1 to 17 (MWPLTALLLLVPSSGQA). Ig-like C2-type domains lie at 23–101 (PILS…LSVS) and 103–189 (DWLI…VAVT). 2 disulfide bridges follow: Cys-44-Cys-85 and Cys-124-Cys-168. N-linked (GlcNAc...) asparagine glycosylation is present at Asn-152. The interval 400 to 426 (ELRGTPETPTSHFAVSPGTPETTPVES) is disordered. The segment covering 406–426 (ETPTSHFAVSPGTPETTPVES) has biased composition (polar residues).

In terms of tissue distribution, expressed at low levels. Expressed in B-lymphocytes. Detected in tonsil, lung, kidney, spleen and placenta. Expressed by a small subset of germinal center B-cells in tonsils and by melanocytes (at protein level).

The protein localises to the cytoplasm. It is found in the endoplasmic reticulum. This is Fc receptor-like B (FCRLB) from Homo sapiens (Human).